The chain runs to 1585 residues: Histone acetyltransferase lsy-12 (1585 aa).

Disordered regions lie at residues 1-37 (MGKK…ARRE) and 279-491 (GPQH…DDPV). Positions 23–37 (PKDRTARPTAAARRE) are enriched in basic and acidic residues. The span at 279–296 (GPQHENVTVSENVLSTES) shows a compositional bias: polar residues. Positions 302–312 (TETKRLHDSSR) are enriched in basic and acidic residues. Polar residues-rich tracts occupy residues 355 to 364 (LLSNPHSTPV) and 411 to 426 (SRLS…SNDL). Low complexity predominate over residues 431-440 (SAPSSSSAAS). The segment covering 453 to 469 (QQRRKGNQSAARSRKIK) has biased composition (basic residues). Residues 477–491 (QEDEPMELDSDDDPV) are compositionally biased toward acidic residues. Residues 544–830 (EQARLPERIH…YDPECLDWVP (287 aa)) form the MYST-type HAT domain. The segment at 577–602 (LFICEFCFFYARSDEIMQNHAKKCML) adopts a C2HC MYST-type zinc-finger fold. Lys-644 carries the N6-acetyllysine; by autocatalysis modification. Acetyl-CoA is bound at residue 685–689 (SCIMT). The Proton donor/acceptor role is filled by Glu-720. Ser-724 and Lys-815 together coordinate acetyl-CoA. 2 stretches are compositionally biased toward basic and acidic residues: residues 844–855 (SKEEIEQDEQRR) and 947–956 (VLDKSNIREE). Disordered regions lie at residues 844–903 (SKEE…LKHE), 927–1262 (EENK…IGKS), 1286–1373 (ESTA…ASNH), and 1431–1507 (HHQF…VHPQ). Over residues 977–999 (NKCNNTESEPNPSGRKTSATSSG) the composition is skewed to polar residues. Positions 1011–1022 (TEEEEEDDDPTD) are enriched in acidic residues. The segment covering 1029–1046 (DDEKPFETSVNKEKNEKS) has biased composition (basic and acidic residues). Residues 1047–1060 (RRGKKVSKKRRSVA) are compositionally biased toward basic residues. Composition is skewed to basic and acidic residues over residues 1070 to 1081 (VRDRDEPKKAEN) and 1135 to 1151 (DIPK…AYDR). The span at 1164–1173 (PTPDSYHSSP) shows a compositional bias: low complexity. The segment covering 1185–1194 (LMQAQQNIYQ) has biased composition (polar residues). The span at 1196-1207 (NDCHFAENDSKP) shows a compositional bias: basic and acidic residues. Composition is skewed to polar residues over residues 1298-1317 (AGPS…NTTP) and 1324-1333 (HPNSQQQATP). Low complexity predominate over residues 1482–1493 (QHQQQQPQQPQQ).

Belongs to the MYST (SAS/MOZ) family.

It carries out the reaction L-lysyl-[protein] + acetyl-CoA = N(6)-acetyl-L-lysyl-[protein] + CoA + H(+). In terms of biological role, probable histone acetyltransferase. Required to initiate and then maintain lateralized gene expression in the ASE sensory neurons. Involved in determining cell fate in the ASE neurons. The protein is Histone acetyltransferase lsy-12 of Caenorhabditis elegans.